We begin with the raw amino-acid sequence, 513 residues long: Maturase K (513 aa).

The protein belongs to the intron maturase 2 family. MatK subfamily.

The protein localises to the plastid. The protein resides in the chloroplast. Usually encoded in the trnK tRNA gene intron. Probably assists in splicing its own and other chloroplast group II introns. In Keckiella cordifolia (Heart-leafed penstemon), this protein is Maturase K.